Reading from the N-terminus, the 351-residue chain is Nuclear inhibitor of protein phosphatase 1 (351 aa).

The interaction with CDC5L, SF3B1 and MELK stretch occupies residues 1–142 (MAAAVNSGSS…LPSAVKGDEK (142 aa)). Residues 49–101 (YLFGRNPDLCDFTIDHQSCSRVHAALVYHKHLKRVFLIDLNSTHGTFLGHIRL) enclose the FHA domain. Residues 143-224 (MGGEDDELKG…VDPSVGRFRN (82 aa)) form an interaction with EED region. Phosphothreonine is present on threonine 161. Phosphoserine is present on residues serine 178 and serine 199. 2 short sequence motifs (nuclear localization signal) span residues 185 to 209 (GNLD…DDEI) and 210 to 240 (INPE…RMEG). The involved in PP-1 inhibition stretch occupies residues 191-200 (RPKRKRKNSR). Residues 200 to 203 (RVTF) are involved in PP-1 binding. Serine 204 bears the Phosphoserine mark. The residue at position 249 (serine 249) is a Phosphoserine. Tyrosine 264 carries the post-translational modification Phosphotyrosine. The tract at residues 310–329 (AVAINPTPNPAVYNPEAVNE) is interaction with EED. The segment at 314–351 (NPTPNPAVYNPEAVNEPKKKKYAKEAWPGKKPTPSLLI) is disordered. The RNA-binding stretch occupies residues 330–351 (PKKKKYAKEAWPGKKPTPSLLI). Residues 331–337 (KKKKYAK) are involved in PP-1 inhibition. Tyrosine 335 carries the phosphotyrosine modification.

As to quaternary structure, interacts with phosphorylated CDC5L, SF3B1 and MELK. Part of the spliceosome. Interacts with PPP1CA, PPP1CB and PPP1CC. Interacts with EED. Part of a complex consisting of PPP1R8, EED, HDAC2 and PP-1. In terms of processing, may be inactivated by phosphorylation on Ser-199 or Ser-204.

The protein resides in the nucleus. Its subcellular location is the nucleus speckle. Functionally, inhibitor subunit of the major nuclear protein phosphatase-1 (PP-1). It has RNA-binding activity but does not cleave RNA and may target PP-1 to RNA-associated substrates. May also be involved in pre-mRNA splicing. Binds DNA and might act as a transcriptional repressor. Essential for cell proliferation and early embryonic development. In Mus musculus (Mouse), this protein is Nuclear inhibitor of protein phosphatase 1 (Ppp1r8).